Reading from the N-terminus, the 331-residue chain is Glycerol-3-phosphate dehydrogenase [NAD(P)+] (331 aa).

NADPH-binding residues include W11, R30, and K105. 3 residues coordinate sn-glycerol 3-phosphate: K105, G134, and S136. A138 lines the NADPH pocket. Sn-glycerol 3-phosphate is bound by residues K189, D242, S252, R253, and N254. The Proton acceptor role is filled by K189. R253 is a binding site for NADPH. NADPH is bound by residues V277 and E279.

Belongs to the NAD-dependent glycerol-3-phosphate dehydrogenase family.

It is found in the cytoplasm. The catalysed reaction is sn-glycerol 3-phosphate + NAD(+) = dihydroxyacetone phosphate + NADH + H(+). It catalyses the reaction sn-glycerol 3-phosphate + NADP(+) = dihydroxyacetone phosphate + NADPH + H(+). The protein operates within membrane lipid metabolism; glycerophospholipid metabolism. Catalyzes the reduction of the glycolytic intermediate dihydroxyacetone phosphate (DHAP) to sn-glycerol 3-phosphate (G3P), the key precursor for phospholipid synthesis. In Janthinobacterium sp. (strain Marseille) (Minibacterium massiliensis), this protein is Glycerol-3-phosphate dehydrogenase [NAD(P)+].